The primary structure comprises 130 residues: Small ribosomal subunit protein uS11 (130 aa).

The protein belongs to the universal ribosomal protein uS11 family. Part of the 30S ribosomal subunit. Interacts with proteins S7 and S18. Binds to IF-3.

Functionally, located on the platform of the 30S subunit, it bridges several disparate RNA helices of the 16S rRNA. Forms part of the Shine-Dalgarno cleft in the 70S ribosome. The polypeptide is Small ribosomal subunit protein uS11 (Prochlorococcus marinus subsp. pastoris (strain CCMP1986 / NIES-2087 / MED4)).